A 482-amino-acid polypeptide reads, in one-letter code: Protein DETOXIFICATION 13 (482 aa).

Transmembrane regions (helical) follow at residues 39–59 (LICF…LQII), 77–97 (LASS…SCAL), 124–144 (LALV…LLVF), 159–179 (AACL…TRYF), 188–208 (LLIT…LLVY), 218–238 (ALAL…LMCF), 268–288 (AAMI…SGLL), 297–317 (VLSV…AIAA), 337–357 (IVVY…STSL), 381–401 (MAPL…LSGI), 416–436 (LGAF…WIHL), and 439–459 (VGLW…LTLV).

The protein belongs to the multi antimicrobial extrusion (MATE) (TC 2.A.66.1) family.

The protein resides in the membrane. The chain is Protein DETOXIFICATION 13 from Arabidopsis thaliana (Mouse-ear cress).